The following is a 350-amino-acid chain: UDP-glucose 4-epimerase (350 aa).

7-38 (KILVTGSAGFIGTHTVVQLLNNGFNVSIIDNF) is an NAD(+) binding site. A substrate-binding site is contributed by serine 133. Catalysis depends on tyrosine 157, which acts as the Proton acceptor.

Belongs to the NAD(P)-dependent epimerase/dehydratase family. NAD(+) serves as cofactor.

It carries out the reaction UDP-alpha-D-glucose = UDP-alpha-D-galactose. It functions in the pathway carbohydrate metabolism; galactose metabolism. This chain is UDP-glucose 4-epimerase (GALE), found in Pisum sativum (Garden pea).